The sequence spans 298 residues: GTPase Era (298 aa).

The Era-type G domain maps to 3–170 (KSGFVAILGR…VQLLKDNLEE (168 aa)). A G1 region spans residues 11 to 18 (GRPNVGKS). 11–18 (GRPNVGKS) provides a ligand contact to GTP. The segment at 37 to 41 (QTTRN) is G2. The interval 58–61 (DTPG) is G3. GTP contacts are provided by residues 58-62 (DTPGI) and 120-123 (NKID). The G4 stretch occupies residues 120–123 (NKID). Residues 149–151 (ISA) form a G5 region. The KH type-2 domain occupies 201–279 (TQQEVPHSVA…YLETWVKVKK (79 aa)).

This sequence belongs to the TRAFAC class TrmE-Era-EngA-EngB-Septin-like GTPase superfamily. Era GTPase family. In terms of assembly, monomer.

It is found in the cytoplasm. Its subcellular location is the cell membrane. An essential GTPase that binds both GDP and GTP, with rapid nucleotide exchange. Plays a role in 16S rRNA processing and 30S ribosomal subunit biogenesis and possibly also in cell cycle regulation and energy metabolism. The protein is GTPase Era of Streptococcus equi subsp. equi (strain 4047).